Reading from the N-terminus, the 216-residue chain is Twisted gastrulation protein homolog 1-A (216 aa).

A signal peptide spans 1–25 (MKPSFLHIPAAALLLCSLWILPIYC). N-linked (GlcNAc...) asparagine glycans are attached at residues Asn-52, Asn-81, and Asn-145.

The protein belongs to the twisted gastrulation protein family. Binds directly to bmp2, bmp4 and bmp7 and can form a ternary complex with bmps and chordin, thus preventing the binding of bmps to their cell surface receptors. Posterior defects are induced by overexpression. This may arise through alteration of bmp4 or chrd function in the developing tailbud region.

It is found in the secreted. Functionally, involved in dorsal-ventral patterning, permitting peak BMP signaling by antagonizing the residual anti-BMP activity of the cleavage products of chrd. Functions to promote the formation of ventral mesoderm by increasing the activity of bmp7 and other BMPS. Seems to antagonize BMP signaling by forming ternary complexes with chrd and BMPs, thereby preventing BMPs from binding to their receptors. In addition to the anti-BMP function, also has pro-BMP activity, partly mediated by cleavage and degradation of chrd, which releases BMPs from ternary complexes. May be an important modulator of BMP-regulated cartilage development and chondrocyte differentiation. The sequence is that of Twisted gastrulation protein homolog 1-A (twsg1-a) from Xenopus laevis (African clawed frog).